We begin with the raw amino-acid sequence, 474 residues long: UDP-N-acetylmuramoylalanine--D-glutamate ligase (474 aa).

134–140 (GSNGKST) is a binding site for ATP.

It belongs to the MurCDEF family.

The protein resides in the cytoplasm. It carries out the reaction UDP-N-acetyl-alpha-D-muramoyl-L-alanine + D-glutamate + ATP = UDP-N-acetyl-alpha-D-muramoyl-L-alanyl-D-glutamate + ADP + phosphate + H(+). The protein operates within cell wall biogenesis; peptidoglycan biosynthesis. Functionally, cell wall formation. Catalyzes the addition of glutamate to the nucleotide precursor UDP-N-acetylmuramoyl-L-alanine (UMA). The polypeptide is UDP-N-acetylmuramoylalanine--D-glutamate ligase (Thiobacillus denitrificans (strain ATCC 25259 / T1)).